A 359-amino-acid chain; its full sequence is Lipopolysaccharide 1,6-galactosyltransferase (359 aa).

The UDP site is built by Gln-244 and Glu-276.

Belongs to the glycosyltransferase group 1 family. Glycosyltransferase 4 subfamily.

It catalyses the reaction alpha-D-Glc-(1-&gt;3)-[L-alpha-D-Hep-(1-&gt;7)]-4-O-PO3(2-)-L-alpha-D-Hep-(1-&gt;3)-4-O-PO3(2-)-L-alpha-D-Hep-(1-&gt;5)-[alpha-Kdo-(2-&gt;4)]-alpha-Kdo-(2-&gt;6)-lipid A + UDP-alpha-D-galactose = alpha-D-Gal-(1-&gt;6)-alpha-D-Glc-(1-&gt;3)-[L-alpha-D-Hep-(1-&gt;7)]-4-O-PO3(2-)-L-alpha-D-Hep-(1-&gt;3)-4-O-PO3(2-)-L-alpha-D-Hep-(1-&gt;5)-[alpha-Kdo-(2-&gt;4)]-alpha-Kdo-(2-&gt;6)-lipid A + UDP + H(+). It functions in the pathway bacterial outer membrane biogenesis; LPS core biosynthesis. Its function is as follows. Galactosyltransferase involved in the biosynthesis of the core oligosaccharide region of lipopolysaccharide (LPS). Catalyzes the addition of galactose from UDP-galactose to the first glucose residue of the LPS outer core. The sequence is that of Lipopolysaccharide 1,6-galactosyltransferase from Salmonella typhimurium (strain LT2 / SGSC1412 / ATCC 700720).